The following is a 457-amino-acid chain: Acetylcholine receptor subunit alpha (457 aa).

An N-terminal signal peptide occupies residues 1–20; the sequence is MELSTVLLLLGLCSAGLVLG. At 21–230 the chain is on the extracellular side; the sequence is SEHETRLVAK…ITYHFVMQRL (210 aa). Intrachain disulfides connect C148–C162 and C212–C213. The N-linked (GlcNAc...) asparagine glycan is linked to N161. 3 helical membrane-spanning segments follow: residues 231–255, 263–281, and 297–316; these read PLYF…VFYL, MTLS…LVIV, and YMLF…VIVI. Residues 317–428 lie on the Cytoplasmic side of the membrane; the sequence is NTHHRSPSTH…WKYVAMVMDH (112 aa). Residues 429 to 447 form a helical membrane-spanning segment; it reads ILLGVFMLVCLIGTLAVFA.

Belongs to the ligand-gated ion channel (TC 1.A.9) family. Acetylcholine receptor (TC 1.A.9.1) subfamily. Alpha-1/CHRNA1 sub-subfamily. In terms of assembly, one of the alpha chains that assemble within the acetylcholine receptor, a pentamer of two alpha chains, a beta, a delta, and a gamma (in immature muscle) or epsilon (in mature muscle) chains. The muscle heteropentamer composed of alpha-1, beta-1, delta, epsilon subunits interacts with the alpha-conotoxin ImII.

The protein resides in the postsynaptic cell membrane. It is found in the cell membrane. The enzyme catalyses K(+)(in) = K(+)(out). It catalyses the reaction Na(+)(in) = Na(+)(out). Its function is as follows. Upon acetylcholine binding, the AChR responds by an extensive change in conformation that affects all subunits and leads to opening of an ion-conducting channel across the plasma membrane. This is Acetylcholine receptor subunit alpha (Chrna1) from Mus musculus (Mouse).